Consider the following 298-residue polypeptide: MSEQTPHHCGSVAVIGRPNVGKSTLTNALVGAKVSIVSNRPQTTRHRLLGIATYPEGQLVLVDTPGLHKVQKRAMNRVMNRAARGSLEGVDAGLLVIEAGRWDEEDSLAFNVLRDAGIPVVLVVNKIDRLKDKGALLPFLQEVTAGRDFSSVHPISAQKRNGLEALVRDVLALLPEAPPMFGEDEITDRSQRFLAGELVREQLMRQLGEELPYATTVEIERFTEDGNLLRIGAVIWVEREGQKAIVIGKGGTRLKEIGAKSRLQMERLFGAKVFLETWVRVREGWSDDEAALKAFGYE.

One can recognise an Era-type G domain in the interval 8–176 (HCGSVAVIGR…VRDVLALLPE (169 aa)). The tract at residues 16 to 23 (GRPNVGKS) is G1. Residue 16–23 (GRPNVGKS) participates in GTP binding. Positions 42-46 (QTTRH) are G2. Residues 63 to 66 (DTPG) are G3. GTP contacts are provided by residues 63 to 67 (DTPGL) and 125 to 128 (NKID). Residues 125–128 (NKID) form a G4 region. The segment at 155–157 (ISA) is G5. Positions 199 to 283 (VREQLMRQLG…FLETWVRVRE (85 aa)) constitute a KH type-2 domain.

Belongs to the TRAFAC class TrmE-Era-EngA-EngB-Septin-like GTPase superfamily. Era GTPase family. Monomer.

It localises to the cytoplasm. The protein localises to the cell inner membrane. An essential GTPase that binds both GDP and GTP, with rapid nucleotide exchange. Plays a role in 16S rRNA processing and 30S ribosomal subunit biogenesis and possibly also in cell cycle regulation and energy metabolism. This is GTPase Era from Stenotrophomonas maltophilia (strain R551-3).